The following is a 345-amino-acid chain: D(2) dopamine receptor B (345 aa).

Residues 1 to 10 (EWRFSRIHCD) lie on the Extracellular side of the membrane. Cys-9 and Cys-84 are joined by a disulfide. A helical transmembrane segment spans residues 11 to 32 (IFVTLDVMMCTASILNLCAISI). The Cytoplasmic segment spans residues 33 to 53 (DRYTAVAMPMLYNTRYSSKRR). The chain crosses the membrane as a helical span at residues 54–74 (VTVMISVVWVLSFAISCPLLF). The Extracellular segment spans residues 75 to 90 (GLNNTASTVCIIDNPA). Asn-77 carries an N-linked (GlcNAc...) asparagine glycan. A helical membrane pass occupies residues 91 to 115 (FVIYSSIVSFYVPFIVTLLVYVQIY). Over 116 to 275 (IVLRKRRKRV…SQHKEKKATQ (160 aa)) the chain is Cytoplasmic. Basic and acidic residues predominate over residues 166–177 (KKKVEAGNHPED). The segment at 166–199 (KKKVEAGNHPEDMEMEMMSSTSPPEKTKHKSASP) is disordered. The helical transmembrane segment at 276-297 (MLAIVLGVFIICWLPFFITHIL) threads the bilayer. The Extracellular segment spans residues 298–311 (NMHCNCNIPQALYS). Residues Cys-301 and Cys-303 are joined by a disulfide bond. A helical membrane pass occupies residues 312–333 (AFTWLGYVNSAVNPIIYTTFNV). Residues 334 to 345 (EFRKAFIKILHC) lie on the Cytoplasmic side of the membrane. The S-palmitoyl cysteine moiety is linked to residue Cys-345.

The protein belongs to the G-protein coupled receptor 1 family. Palmitoylated. Palmitoylation is probably required for proper localization to the plasma membrane and stability of the receptor. In terms of tissue distribution, brain; pituitary.

Its subcellular location is the cell membrane. It is found in the golgi apparatus membrane. In terms of biological role, this is one of the five types (D1 to D5) of receptors for dopamine. The activity of this receptor is mediated by G proteins which inhibits adenylyl cyclase. In Xenopus D2R is involved in the regulation of the melanotrope cells of the intermediate pituitary during background adaptation of the animal. This chain is D(2) dopamine receptor B (drd2-b), found in Xenopus laevis (African clawed frog).